The primary structure comprises 232 residues: Large ribosomal subunit protein uL1 (232 aa).

Belongs to the universal ribosomal protein uL1 family. Part of the 50S ribosomal subunit.

In terms of biological role, binds directly to 23S rRNA. The L1 stalk is quite mobile in the ribosome, and is involved in E site tRNA release. Its function is as follows. Protein L1 is also a translational repressor protein, it controls the translation of the L11 operon by binding to its mRNA. In Xanthomonas oryzae pv. oryzae (strain MAFF 311018), this protein is Large ribosomal subunit protein uL1.